The following is a 24-amino-acid chain: Ranatuerin-4 (24 aa).

Cys18 and Cys24 form a disulfide bridge.

Belongs to the frog skin active peptide (FSAP) family. Ranatuerin subfamily. In terms of tissue distribution, expressed by the skin glands.

It is found in the secreted. Antibacterial activity against Gram-positive bacterium S.aureus (MIC=55 uM). Shows no detectable hemolytic activity towards human erythrocytes. The sequence is that of Ranatuerin-4 from Aquarana catesbeiana (American bullfrog).